We begin with the raw amino-acid sequence, 228 residues long: DNA-binding response regulator MtrA (228 aa).

In terms of domain architecture, Response regulatory spans 7 to 120 (RILVVDDDAS…ELVARVRARL (114 aa)). Asp56 is subject to 4-aspartylphosphate. A DNA-binding region (ompR/PhoB-type) is located at residues 128 to 227 (AEMLSIADVE…VRGVGYKAGP (100 aa)).

Phosphorylated by MtrB.

Its function is as follows. Member of the two-component regulatory system MtrA/MtrB. The chain is DNA-binding response regulator MtrA (mtrA) from Mycobacterium bovis (strain ATCC BAA-935 / AF2122/97).